We begin with the raw amino-acid sequence, 109 residues long: uncharacterized protein (109 aa).

The helical transmembrane segment at 78–98 threads the bilayer; the sequence is YTCIMYIGLLCMFVLLYMTVI.

The protein localises to the membrane. This is an uncharacterized protein from Saccharomyces cerevisiae (strain ATCC 204508 / S288c) (Baker's yeast).